A 336-amino-acid polypeptide reads, in one-letter code: 3-isopropylmalate dehydrogenase (336 aa).

Residues Arg87, Arg97, Arg121, and Asp211 each coordinate substrate. Positions 211, 235, and 239 each coordinate Mg(2+). An NAD(+)-binding site is contributed by Gly271 to Asp283.

Belongs to the isocitrate and isopropylmalate dehydrogenases family. LeuB type 2 subfamily. As to quaternary structure, homodimer. Requires Mg(2+) as cofactor. It depends on Mn(2+) as a cofactor.

It localises to the cytoplasm. It carries out the reaction (2R,3S)-3-isopropylmalate + NAD(+) = 4-methyl-2-oxopentanoate + CO2 + NADH. The protein operates within amino-acid biosynthesis; L-leucine biosynthesis; L-leucine from 3-methyl-2-oxobutanoate: step 3/4. Its function is as follows. Catalyzes the oxidation of 3-carboxy-2-hydroxy-4-methylpentanoate (3-isopropylmalate) to 3-carboxy-4-methyl-2-oxopentanoate. The product decarboxylates to 4-methyl-2 oxopentanoate. This is 3-isopropylmalate dehydrogenase from Rhodococcus jostii (strain RHA1).